Reading from the N-terminus, the 377-residue chain is Succinyl-diaminopimelate desuccinylase (377 aa).

His68 lines the Zn(2+) pocket. Asp70 is a catalytic residue. Residue Asp101 participates in Zn(2+) binding. The active-site Proton acceptor is Glu135. Glu136, Glu164, and His350 together coordinate Zn(2+).

Belongs to the peptidase M20A family. DapE subfamily. Homodimer. Requires Zn(2+) as cofactor. Co(2+) serves as cofactor.

It catalyses the reaction N-succinyl-(2S,6S)-2,6-diaminopimelate + H2O = (2S,6S)-2,6-diaminopimelate + succinate. The protein operates within amino-acid biosynthesis; L-lysine biosynthesis via DAP pathway; LL-2,6-diaminopimelate from (S)-tetrahydrodipicolinate (succinylase route): step 3/3. Its function is as follows. Catalyzes the hydrolysis of N-succinyl-L,L-diaminopimelic acid (SDAP), forming succinate and LL-2,6-diaminopimelate (DAP), an intermediate involved in the bacterial biosynthesis of lysine and meso-diaminopimelic acid, an essential component of bacterial cell walls. The chain is Succinyl-diaminopimelate desuccinylase from Acinetobacter baylyi (strain ATCC 33305 / BD413 / ADP1).